A 21-amino-acid polypeptide reads, in one-letter code: 23S rRNA methylase leader peptide (21 aa).

Its function is as follows. Involved in erythromycin resistance. This Corynebacterium diphtheriae protein is 23S rRNA methylase leader peptide.